Reading from the N-terminus, the 253-residue chain is Ras-like protein family member 11A-like (253 aa).

GTP is bound by residues 43-50 (GASNVGKT), 90-97 (DTPCVSLQ), and 157-160 (NKSD). Residues 213 to 233 (GNGEKRKGGLHLARPKSPNMQ) are disordered.

Belongs to the small GTPase superfamily. Ras family.

It is found in the nucleus. It localises to the nucleolus. The catalysed reaction is GTP + H2O = GDP + phosphate + H(+). Regulator of rDNA transcription. The chain is Ras-like protein family member 11A-like from Danio rerio (Zebrafish).